The primary structure comprises 361 residues: Probable dual-specificity RNA methyltransferase RlmN (361 aa).

Glu-104 acts as the Proton acceptor in catalysis. The Radical SAM core domain maps to 110–343 (HEYGNSVCVT…VTIRREQGHD (234 aa)). Cys-117 and Cys-348 are joined by a disulfide. [4Fe-4S] cluster-binding residues include Cys-124, Cys-128, and Cys-131. S-adenosyl-L-methionine-binding positions include 174-175 (GE), Ser-206, 229-231 (SLH), and Asn-305. The S-methylcysteine intermediate role is filled by Cys-348.

Belongs to the radical SAM superfamily. RlmN family. [4Fe-4S] cluster is required as a cofactor.

Its subcellular location is the cytoplasm. It catalyses the reaction adenosine(2503) in 23S rRNA + 2 reduced [2Fe-2S]-[ferredoxin] + 2 S-adenosyl-L-methionine = 2-methyladenosine(2503) in 23S rRNA + 5'-deoxyadenosine + L-methionine + 2 oxidized [2Fe-2S]-[ferredoxin] + S-adenosyl-L-homocysteine. It carries out the reaction adenosine(37) in tRNA + 2 reduced [2Fe-2S]-[ferredoxin] + 2 S-adenosyl-L-methionine = 2-methyladenosine(37) in tRNA + 5'-deoxyadenosine + L-methionine + 2 oxidized [2Fe-2S]-[ferredoxin] + S-adenosyl-L-homocysteine. Its function is as follows. Specifically methylates position 2 of adenine 2503 in 23S rRNA and position 2 of adenine 37 in tRNAs. This chain is Probable dual-specificity RNA methyltransferase RlmN, found in Bacillus licheniformis (strain ATCC 14580 / DSM 13 / JCM 2505 / CCUG 7422 / NBRC 12200 / NCIMB 9375 / NCTC 10341 / NRRL NRS-1264 / Gibson 46).